The chain runs to 179 residues: Large ribosomal subunit protein uL5 (179 aa).

It belongs to the universal ribosomal protein uL5 family. In terms of assembly, part of the 50S ribosomal subunit; part of the 5S rRNA/L5/L18/L25 subcomplex. Contacts the 5S rRNA and the P site tRNA. Forms a bridge to the 30S subunit in the 70S ribosome.

This is one of the proteins that bind and probably mediate the attachment of the 5S RNA into the large ribosomal subunit, where it forms part of the central protuberance. In the 70S ribosome it contacts protein S13 of the 30S subunit (bridge B1b), connecting the 2 subunits; this bridge is implicated in subunit movement. Contacts the P site tRNA; the 5S rRNA and some of its associated proteins might help stabilize positioning of ribosome-bound tRNAs. In Francisella tularensis subsp. novicida (strain U112), this protein is Large ribosomal subunit protein uL5.